The following is a 368-amino-acid chain: F-box/kelch-repeat protein At2g44700 (368 aa).

The segment at 1 to 23 (MSSSNEPPRKTDQPSSSSASASA) is disordered. Low complexity predominate over residues 14–23 (PSSSSASASA). In terms of domain architecture, F-box spans 25–71 (PSLFLSLPLEIISMILARVPKRYYPILCSVSKNMRSLVRSPEIHKAR). One copy of the Kelch repeat lies at 177–221 (KVYVIGGYQDDEIAAESFDLNTQTWEAAPIPDEKESHRWICKANV).

This chain is F-box/kelch-repeat protein At2g44700, found in Arabidopsis thaliana (Mouse-ear cress).